The chain runs to 150 residues: Cytochrome c oxidase subunit 5A, mitochondrial (150 aa).

A mitochondrion-targeting transit peptide spans 1–41; the sequence is MLGAALRRCAVAATTWAGPRGLLHSARTPGPAAAIQSVRCY. The short motif at 2–17 is the SIFI-degron element; it reads LGAALRRCAVAATTWA. Residues Lys-87 and Lys-113 each carry the N6-acetyllysine modification. Thr-141 is subject to Phosphothreonine.

It belongs to the cytochrome c oxidase subunit 5A family. In terms of assembly, component of the cytochrome c oxidase (complex IV, CIV), a multisubunit enzyme composed of 14 subunits. The complex is composed of a catalytic core of 3 subunits MT-CO1, MT-CO2 and MT-CO3, encoded in the mitochondrial DNA, and 11 supernumerary subunits COX4I, COX5A, COX5B, COX6A, COX6B, COX6C, COX7A, COX7B, COX7C, COX8 and NDUFA4, which are encoded in the nuclear genome. The complex exists as a monomer or a dimer and forms supercomplexes (SCs) in the inner mitochondrial membrane with NADH-ubiquinone oxidoreductase (complex I, CI) and ubiquinol-cytochrome c oxidoreductase (cytochrome b-c1 complex, complex III, CIII), resulting in different assemblies (supercomplex SCI(1)III(2)IV(1) and megacomplex MCI(2)III(2)IV(2)). Interacts with AFG1L. Interacts with RAB5IF. Post-translationally, in response to mitochondrial stress, the precursor protein is ubiquitinated by the SIFI complex in the cytoplasm before mitochondrial import, leading to its degradation. Within the SIFI complex, UBR4 initiates ubiquitin chain that are further elongated or branched by KCMF1.

It is found in the mitochondrion inner membrane. It functions in the pathway energy metabolism; oxidative phosphorylation. Its function is as follows. Component of the cytochrome c oxidase, the last enzyme in the mitochondrial electron transport chain which drives oxidative phosphorylation. The respiratory chain contains 3 multisubunit complexes succinate dehydrogenase (complex II, CII), ubiquinol-cytochrome c oxidoreductase (cytochrome b-c1 complex, complex III, CIII) and cytochrome c oxidase (complex IV, CIV), that cooperate to transfer electrons derived from NADH and succinate to molecular oxygen, creating an electrochemical gradient over the inner membrane that drives transmembrane transport and the ATP synthase. Cytochrome c oxidase is the component of the respiratory chain that catalyzes the reduction of oxygen to water. Electrons originating from reduced cytochrome c in the intermembrane space (IMS) are transferred via the dinuclear copper A center (CU(A)) of subunit 2 and heme A of subunit 1 to the active site in subunit 1, a binuclear center (BNC) formed by heme A3 and copper B (CU(B)). The BNC reduces molecular oxygen to 2 water molecules using 4 electrons from cytochrome c in the IMS and 4 protons from the mitochondrial matrix. The protein is Cytochrome c oxidase subunit 5A, mitochondrial (COX5A) of Papio anubis (Olive baboon).